Here is an 81-residue protein sequence, read N- to C-terminus: RNA-binding protein Hfq (81 aa).

A Sm domain is found at 10–69 (DPFLNTLRREHVPVSIYLVNGIKLQGQIESFDQYVVLLRNTVTQMVYKHAISTIVPGRAV).

Belongs to the Hfq family. Homohexamer.

Functionally, RNA chaperone that binds small regulatory RNA (sRNAs) and mRNAs to facilitate mRNA translational regulation in response to envelope stress, environmental stress and changes in metabolite concentrations. Also binds with high specificity to tRNAs. The sequence is that of RNA-binding protein Hfq from Variovorax paradoxus (strain S110).